The chain runs to 1748 residues: RANBP2-like and GRIP domain-containing protein 1 (1748 aa).

Phosphothreonine is present on T14. TPR repeat units lie at residues 51–84, 575–608, and 639–672; these read PRAH…NPPQ, QKMG…LKII, and EDAH…VSYW. Residues 751–796 form a disordered region; that stretch reads GPLYKNGSLRNADSEIKHSTPSPTKYSLSPSKSYKYSPKTPPRWAE. A compositionally biased stretch (low complexity) spans 769–788; it reads STPSPTKYSLSPSKSYKYSP. Residues 1021–1157 enclose the RanBD1 1 domain; the sequence is HFEPVVQMPE…FEECQRLLLD (137 aa). Disordered regions lie at residues 1198–1233 and 1291–1316; these read TKVT…TLEW and AKLN…ERDG. Residues 1220 to 1229 are compositionally biased toward polar residues; sequence IKPNPENTGP. A compositionally biased stretch (acidic residues) spans 1302 to 1314; it reads TDEESDVTQEEER. In terms of domain architecture, RanBD1 2 spans 1318-1454; it reads YFEPVVPLPD…FDEAKTAQEK (137 aa). Over residues 1565 to 1578 the composition is skewed to polar residues; that stretch reads NDSETSSVAQSGSE. Residues 1565 to 1606 form a disordered region; the sequence is NDSETSSVAQSGSESKVEPKKCELSKNSDIEQSSDSKVKNLS. Residues 1579-1602 are compositionally biased toward basic and acidic residues; it reads SKVEPKKCELSKNSDIEQSSDSKV. Residues 1685–1735 form the GRIP domain; the sequence is QEESAANVEHLKNVLLQFIFLKPGSERESLLPVINTMLQLSPEEKGKLAAV.

The sequence is that of RANBP2-like and GRIP domain-containing protein 1 (RGPD1) from Homo sapiens (Human).